The chain runs to 509 residues: Bifunctional purine biosynthesis protein PurH (509 aa).

The MGS-like domain maps to 1 to 144 (MKRALISVSD…KNYAAVTVVV (144 aa)).

It belongs to the PurH family.

The catalysed reaction is (6R)-10-formyltetrahydrofolate + 5-amino-1-(5-phospho-beta-D-ribosyl)imidazole-4-carboxamide = 5-formamido-1-(5-phospho-D-ribosyl)imidazole-4-carboxamide + (6S)-5,6,7,8-tetrahydrofolate. The enzyme catalyses IMP + H2O = 5-formamido-1-(5-phospho-D-ribosyl)imidazole-4-carboxamide. It functions in the pathway purine metabolism; IMP biosynthesis via de novo pathway; 5-formamido-1-(5-phospho-D-ribosyl)imidazole-4-carboxamide from 5-amino-1-(5-phospho-D-ribosyl)imidazole-4-carboxamide (10-formyl THF route): step 1/1. The protein operates within purine metabolism; IMP biosynthesis via de novo pathway; IMP from 5-formamido-1-(5-phospho-D-ribosyl)imidazole-4-carboxamide: step 1/1. The polypeptide is Bifunctional purine biosynthesis protein PurH (Listeria innocua serovar 6a (strain ATCC BAA-680 / CLIP 11262)).